Consider the following 173-residue polypeptide: Mesencephalic astrocyte-derived neurotrophic factor homolog (173 aa).

The signal sequence occupies residues 1–22 (MNTSQIVLMFCLVVGVAQTALA). Intrachain disulfides connect Cys-28-Cys-114, Cys-31-Cys-103, Cys-61-Cys-72, and Cys-148-Cys-151.

Belongs to the ARMET family.

It localises to the secreted. Required during the maturation of the embryonic nervous system for maintenance of neuronal and cuticular connectivity. Essential for maintenance of dopaminergic neurons and dopamine levels. In Drosophila grimshawi (Hawaiian fruit fly), this protein is Mesencephalic astrocyte-derived neurotrophic factor homolog.